A 215-amino-acid chain; its full sequence is Phosphatidylserine decarboxylase proenzyme (215 aa).

Residue S183 is the Schiff-base intermediate with substrate; via pyruvic acid of the active site. Position 183 is a pyruvic acid (Ser); by autocatalysis (S183).

Belongs to the phosphatidylserine decarboxylase family. PSD-A subfamily. In terms of assembly, heterodimer of a large membrane-associated beta subunit and a small pyruvoyl-containing alpha subunit. The cofactor is pyruvate. In terms of processing, is synthesized initially as an inactive proenzyme. Formation of the active enzyme involves a self-maturation process in which the active site pyruvoyl group is generated from an internal serine residue via an autocatalytic post-translational modification. Two non-identical subunits are generated from the proenzyme in this reaction, and the pyruvate is formed at the N-terminus of the alpha chain, which is derived from the carboxyl end of the proenzyme. The post-translation cleavage follows an unusual pathway, termed non-hydrolytic serinolysis, in which the side chain hydroxyl group of the serine supplies its oxygen atom to form the C-terminus of the beta chain, while the remainder of the serine residue undergoes an oxidative deamination to produce ammonia and the pyruvoyl prosthetic group on the alpha chain.

The protein resides in the cell membrane. The catalysed reaction is a 1,2-diacyl-sn-glycero-3-phospho-L-serine + H(+) = a 1,2-diacyl-sn-glycero-3-phosphoethanolamine + CO2. Its pathway is phospholipid metabolism; phosphatidylethanolamine biosynthesis; phosphatidylethanolamine from CDP-diacylglycerol: step 2/2. Functionally, catalyzes the formation of phosphatidylethanolamine (PtdEtn) from phosphatidylserine (PtdSer). This chain is Phosphatidylserine decarboxylase proenzyme, found in Symbiobacterium thermophilum (strain DSM 24528 / JCM 14929 / IAM 14863 / T).